The sequence spans 124 residues: Ribonuclease pancreatic (124 aa).

Basic and acidic residues predominate over residues 1–13; the sequence is KESAAAKFERQHM. Residues 1-24 form a disordered region; the sequence is KESAAAKFERQHMDPSMSSASSSN. Residues Lys-7 and Arg-10 each contribute to the substrate site. The active-site Proton acceptor is His-12. 4 disulfides stabilise this stretch: Cys-26/Cys-84, Cys-40/Cys-95, Cys-58/Cys-110, and Cys-65/Cys-72. Residues 41–45, Lys-66, and Arg-85 each bind substrate; that span reads KPVNT. His-119 (proton donor) is an active-site residue.

Belongs to the pancreatic ribonuclease family. In terms of assembly, monomer. Interacts with and forms tight 1:1 complexes with RNH1. Dimerization of two such complexes may occur. Interaction with RNH1 inhibits this protein. Pancreas.

It is found in the secreted. The enzyme catalyses an [RNA] containing cytidine + H2O = an [RNA]-3'-cytidine-3'-phosphate + a 5'-hydroxy-ribonucleotide-3'-[RNA].. It carries out the reaction an [RNA] containing uridine + H2O = an [RNA]-3'-uridine-3'-phosphate + a 5'-hydroxy-ribonucleotide-3'-[RNA].. Endonuclease that catalyzes the cleavage of RNA on the 3' side of pyrimidine nucleotides. Acts on single-stranded and double-stranded RNA. In Dama dama (Fallow deer), this protein is Ribonuclease pancreatic (RNASE1).